The chain runs to 195 residues: Transmembrane protein 126A (195 aa).

The Mitochondrial matrix portion of the chain corresponds to 1 to 33 (MENHKSNNKENITIVDISRKINQLPEAERNLLE). The chain crosses the membrane as a helical span at residues 34-54 (NGSVYVGLNAALCGLIANSLF). Over 55–56 (RR) the chain is Mitochondrial intermembrane. A helical transmembrane segment spans residues 57–77 (ILNVTKARIAAGLPMAGIPFL). The Mitochondrial matrix portion of the chain corresponds to 78–110 (TTDLTYRCFVSFPLNTGDLDCETCTITRSGLTG). The helical transmembrane segment at 111 to 131 (LVIGGLYPVFLAIPVNGGLAA) threads the bilayer. Topologically, residues 132-158 (RYQSALLPHKGNILSYWIRTSKPVFRK) are mitochondrial intermembrane. A helical transmembrane segment spans residues 159–175 (MLFPILLQTMFSAYLGS). Residues 176–195 (EQYKLLIKALQLSEPGKEIH) lie on the Mitochondrial matrix side of the membrane.

It belongs to the TMEM126 family. Interacts with OXA1L; promoting cotranslational quality control in mitochondria. Strongly expressed in brain, cerebellum, skeletal muscle, testis. High expression also found in fetal brain, fetal retinal pigmentary epithelium, and fetal retina. Highly expressed in retinal ganglion cells.

Its subcellular location is the mitochondrion inner membrane. Functionally, protein required for the cotranslational protein quality control in the inner membrane of the mitochondria. Associates with newly synthesized polypeptides and may act as a chaperone that cooperates with OXA1L for the insertion of newly synthesized mitochondrial proteins into the inner membrane. Required for the assembly of the ND4 module of mitochondrial complex I. The polypeptide is Transmembrane protein 126A (Homo sapiens (Human)).